Consider the following 631-residue polypeptide: Vacuolar-sorting receptor 6 (631 aa).

The signal sequence occupies residues Met-1 to Gly-25. Residues Arg-26–Gly-563 lie on the Lumenal side of the membrane. Positions Asn-57–Leu-165 constitute a PA domain. Asn-294 and Asn-431 each carry an N-linked (GlcNAc...) asparagine glycan. 2 consecutive EGF-like domains span residues Glu-413–Glu-463 and Glu-494–Lys-540. Disulfide bonds link Cys-417–Cys-435, Cys-424–Cys-444, Cys-446–Cys-462, Cys-498–Cys-511, and Cys-530–Cys-539. Residues Trp-564–Phe-584 traverse the membrane as a helical segment. Residues Tyr-585 to Ala-631 lie on the Cytoplasmic side of the membrane. Residues Tyr-604–Leu-607 carry the Tyrosine-based internalization motif motif. The interval Gln-610–Ala-631 is disordered.

The protein belongs to the VSR (BP-80) family. Expressed in seedlings, roots, leaves, flowers and siliques.

It is found in the membrane. The protein resides in the golgi apparatus membrane. The protein localises to the cytoplasmic vesicle. It localises to the clathrin-coated vesicle membrane. Its subcellular location is the prevacuolar compartment membrane. Functionally, vacuolar-sorting receptor (VSR) involved in clathrin-coated vesicles sorting from Golgi apparatus to vacuoles. This Arabidopsis thaliana (Mouse-ear cress) protein is Vacuolar-sorting receptor 6 (VSR6).